The sequence spans 339 residues: UDP-galactose transporter homolog 1 (339 aa).

The Lumenal portion of the chain corresponds to 1-4; it reads MAGS. Residues 5–25 traverse the membrane as a helical segment; sequence TSSLVICAIGIYATFLTWALV. Over 26–42 the chain is Cytoplasmic; that stretch reads QEPLATRTWPNSMGKFQ. A helical transmembrane segment spans residues 43-63; sequence FPNVISLIQASVAMMMGYLYL. Residues 64–106 lie on the Lumenal side of the membrane; sequence NWKKVEYPPRKMIKDHWKQLMLISFTQSSSGPLATTSLKHVDY. Residues 107–127 form a helical membrane-spanning segment; sequence LTYMLAKSCKMIPVLLVHLLL. Residues 128-136 are Cytoplasmic-facing; the sequence is YRTPIASQK. A helical transmembrane segment spans residues 137 to 157; it reads KVVALLVSLGVTIFTIGGNDG. At 158-174 the chain is on the lumenal side; it reads KKLKRSFNESGNDNKLQ. N-linked (GlcNAc...) asparagine glycosylation occurs at asparagine 165. A helical transmembrane segment spans residues 175–192; that stretch reads GFGLLFSSLFLDGLTNAT. Residues 193 to 214 lie on the Cytoplasmic side of the membrane; the sequence is QDKLLKANKAKEKGKQTLITGA. Residues 215-235 form a helical membrane-spanning segment; that stretch reads HLMFTLNLFVILWNILYFIVI. The Lumenal segment spans residues 236–245; the sequence is DCKQWDNAVS. A helical membrane pass occupies residues 246–266; that stretch reads VLTMDPQVWGYLMLYSFCGAM. The Cytoplasmic segment spans residues 267–280; sequence GQCFIFYTLEQFGS. Residues 281 to 303 traverse the membrane as a helical segment; sequence LVLIMITVTRKMVSMILSIIVFG. Topologically, residues 304-307 are lumenal; sequence KSVR. A helical membrane pass occupies residues 308-327; it reads FQQWVGMFIVFGGITWEALN. Residues 328–339 are Cytoplasmic-facing; it reads KKKANIPKAKSA.

The protein belongs to the nucleotide-sugar transporter family. SLC35B subfamily.

It is found in the endoplasmic reticulum membrane. In terms of biological role, may be involved in specific transport of UDP-Gal from the cytosol to the Golgi lumen. Involved in the maintenance of optimal conditions for the folding of secretory pathway proteins in the endoplasmic reticulum. Overexpression confers resistance to the immunosuppressive drug, leflunomide. In Saccharomyces cerevisiae (strain ATCC 204508 / S288c) (Baker's yeast), this protein is UDP-galactose transporter homolog 1 (HUT1).